Consider the following 425-residue polypeptide: MRLSQYYLPTLKEKPAHARIISHQYSLRAGLIKQIASGIYTWLPLGLRVLKNIEGIIRDEMNKSGAIEALMPCVQPASLWRESGRYDDYGKTMLRIRDRHEEDMLFGPTHEEVATDLIRDIVKSYKNLPLCLYQIQWKFRDEVRPRYGVMRGREFLMKDAYSFNVNYESALNSYNLMYKTYIKIFKRMGLIPIGVRADTGLIGGNLSHEFHILASTGESTLYYDNKFFELLESEDVKSLKSIYAVADDIHDPKTCPVPQEQLNVSKGIEIGHIFYFGDKYSKPMNAKVTAQDGKNVNIHMGSYGIGVSRLVGAIIEAFHDDKGITWPEAVAPFRVGLINLQTKTAEYVEIANKIYSTLKSDEVLYDDTEGSIGVKFAKMDLIGLPWQIIVGKKAVSENIIEIKNRATGKVEEVQIEEAINYFNVK.

It belongs to the class-II aminoacyl-tRNA synthetase family. ProS type 2 subfamily. In terms of assembly, homodimer.

The protein resides in the cytoplasm. The catalysed reaction is tRNA(Pro) + L-proline + ATP = L-prolyl-tRNA(Pro) + AMP + diphosphate. Functionally, catalyzes the attachment of proline to tRNA(Pro) in a two-step reaction: proline is first activated by ATP to form Pro-AMP and then transferred to the acceptor end of tRNA(Pro). The protein is Proline--tRNA ligase of Wolbachia sp. subsp. Brugia malayi (strain TRS).